Here is a 383-residue protein sequence, read N- to C-terminus: Chaperone protein DnaJ (383 aa).

The J domain maps to 5–70; it reads DYYKTLGVTQ…KKRTAYDQYG (66 aa). A CR-type zinc finger spans residues 137-215; it reads GTIKEIKIPT…CHGNGRIEIS (79 aa). Positions 150, 153, 167, 170, 189, 192, 203, and 206 each coordinate Zn(2+). 4 CXXCXGXG motif repeats span residues 150–157, 167–174, 189–196, and 203–210; these read CPTCYGYG, CPTCRGNG, CPQCHGEG, and CRRCHGNG.

The protein belongs to the DnaJ family. Homodimer. Zn(2+) is required as a cofactor.

Its subcellular location is the cytoplasm. Its function is as follows. Participates actively in the response to hyperosmotic and heat shock by preventing the aggregation of stress-denatured proteins and by disaggregating proteins, also in an autonomous, DnaK-independent fashion. Unfolded proteins bind initially to DnaJ; upon interaction with the DnaJ-bound protein, DnaK hydrolyzes its bound ATP, resulting in the formation of a stable complex. GrpE releases ADP from DnaK; ATP binding to DnaK triggers the release of the substrate protein, thus completing the reaction cycle. Several rounds of ATP-dependent interactions between DnaJ, DnaK and GrpE are required for fully efficient folding. Also involved, together with DnaK and GrpE, in the DNA replication of plasmids through activation of initiation proteins. The chain is Chaperone protein DnaJ from Buchnera aphidicola subsp. Baizongia pistaciae (strain Bp).